Reading from the N-terminus, the 337-residue chain is Cytoskeleton protein RodZ (337 aa).

The Cytoplasmic portion of the chain corresponds to 1-111 (MNTEATHDQN…LGKRRKKRDG (111 aa)). The 53-residue stretch at 19-71 (LRNAREQLGLSQQAVAERLCLKVSTVRDIEEDKAPADLASTFLRGYIRSYARL) folds into the HTH cro/C1-type domain. The H-T-H motif DNA-binding region spans 30–49 (QQAVAERLCLKVSTVRDIEE). A helical; Signal-anchor for type II membrane protein transmembrane segment spans residues 112 to 132 (WLMTFTWLVLFVVIGLSGAWW). Topologically, residues 133 to 337 (WQDHKAQQEE…TLNAEQSPAQ (205 aa)) are periplasmic. A compositionally biased stretch (polar residues) spans 145 to 167 (TMADQSSAELSSNSEQGQSVPLN). Positions 145–220 (TMADQSSAEL…VSPSQANVDT (76 aa)) are disordered. Low complexity predominate over residues 168–207 (TSTTTDPATTSTPPASVDTTATNTQTPAVTAPAPAVDPQQ). A compositionally biased stretch (polar residues) spans 208–218 (NAVVSPSQANV).

The protein belongs to the RodZ family.

The protein resides in the cell inner membrane. Its function is as follows. Cytoskeletal protein that is involved in cell-shape control through regulation of the length of the long axis. The sequence is that of Cytoskeleton protein RodZ from Escherichia coli O17:K52:H18 (strain UMN026 / ExPEC).